We begin with the raw amino-acid sequence, 269 residues long: Phosphate import ATP-binding protein PstB 2 (269 aa).

Residues 23–264 form the ABC transporter domain; the sequence is LEVKDLSIYY…PKKQKTEDYI (242 aa). 55-62 contributes to the ATP binding site; sequence GPSGCGKS.

This sequence belongs to the ABC transporter superfamily. Phosphate importer (TC 3.A.1.7) family. The complex is composed of two ATP-binding proteins (PstB), two transmembrane proteins (PstC and PstA) and a solute-binding protein (PstS).

The protein resides in the cell membrane. It carries out the reaction phosphate(out) + ATP + H2O = ADP + 2 phosphate(in) + H(+). In terms of biological role, part of the ABC transporter complex PstSACB involved in phosphate import. Responsible for energy coupling to the transport system. In Bacillus subtilis (strain 168), this protein is Phosphate import ATP-binding protein PstB 2.